Consider the following 96-residue polypeptide: Tenecin-3 (96 aa).

A signal peptide spans 1–18; sequence MKTFVICLILVVAVSAAP. Residues 19–96 form a disordered region; that stretch reads DHHDGHLGGH…HQGGYKTHGH (78 aa). Tandem repeats lie at residues 23 to 26, 31 to 34, 35 to 38, 39 to 42, 43 to 46, 47 to 50, 51 to 54, 59 to 62, 63 to 66, 67 to 70, 77 to 80, and 86 to 89. Residues 23–89 are 12 X 4 AA repeats of G-X-X-G; it reads GHLGGHQTGH…GPGTGAGHQG (67 aa). Residues 26–89 are compositionally biased toward gly residues; sequence GGHQTGHQGG…GPGTGAGHQG (64 aa).

The protein to H.diomphalia holotricin 3.

It is found in the secreted. In terms of biological role, antifungal heat stable protein produced in response to injury. It is active against C.albicans. No antibacterial activity against Gram-positive and Gram-negative bacteria. This is Tenecin-3 from Tenebrio molitor (Yellow mealworm beetle).